Here is a 338-residue protein sequence, read N- to C-terminus: Lipoate-protein ligase A (338 aa).

Residues 29–216 enclose the BPL/LPL catalytic domain; it reads PATQRVLFLW…AFFAHYGERV (188 aa). ATP-binding positions include Arg-71, 76–79, and Lys-134; that span reads GAVF. Residue Lys-134 participates in (R)-lipoate binding.

This sequence belongs to the LplA family. As to quaternary structure, monomer.

The protein localises to the cytoplasm. The catalysed reaction is L-lysyl-[lipoyl-carrier protein] + (R)-lipoate + ATP = N(6)-[(R)-lipoyl]-L-lysyl-[lipoyl-carrier protein] + AMP + diphosphate + H(+). Its pathway is protein modification; protein lipoylation via exogenous pathway; protein N(6)-(lipoyl)lysine from lipoate: step 1/2. It participates in protein modification; protein lipoylation via exogenous pathway; protein N(6)-(lipoyl)lysine from lipoate: step 2/2. Its function is as follows. Catalyzes both the ATP-dependent activation of exogenously supplied lipoate to lipoyl-AMP and the transfer of the activated lipoyl onto the lipoyl domains of lipoate-dependent enzymes. This is Lipoate-protein ligase A from Escherichia fergusonii (strain ATCC 35469 / DSM 13698 / CCUG 18766 / IAM 14443 / JCM 21226 / LMG 7866 / NBRC 102419 / NCTC 12128 / CDC 0568-73).